A 132-amino-acid polypeptide reads, in one-letter code: Bleomycin resistance protein (132 aa).

The VOC domain occupies 1-129; the sequence is MLQSIPALPV…DNNLISFFQQ (129 aa).

This sequence belongs to the bleomycin resistance protein family.

Binding protein with a strong affinity to the bleomycin family of antibiotics. The polypeptide is Bleomycin resistance protein (bleO) (Geobacillus stearothermophilus (Bacillus stearothermophilus)).